The chain runs to 326 residues: Amino acid--[acyl-carrier-protein] ligase 1 (326 aa).

Cys-131 serves as a coordination point for Zn(2+). Residues Arg-159, Glu-161, and 168-169 (RL) each bind ATP. Residue Glu-176 coordinates Zn(2+). An an L-alpha-amino acid-binding site is contributed by Glu-176. Residues Lys-235 and 250-253 (ACMS) contribute to the ATP site. Cys-279 provides a ligand contact to Zn(2+). An ATP-binding site is contributed by Arg-286.

The protein belongs to the class-II aminoacyl-tRNA synthetase family. Amino acid--[acyl-carrier-protein] ligase subfamily. In terms of assembly, homodimer. The cofactor is Zn(2+).

The enzyme catalyses an L-alpha-amino acid + holo-[ACP] + ATP = an L-alpha-aminoacyl-[ACP] + AMP + diphosphate. In terms of biological role, catalyzes the ATP-dependent activation of L-glycine and its transfer to the phosphopantetheine prosthetic group covalently attached to the vicinal carrier protein bsr0959 of yet unknown function. May participate in nonribosomal peptide synthesis or related processes. L-alanine is a poor substrate whereas L-serine or D-amino acids are not substrates for ATP-dependent activation. Does not display tRNA aminoacylation activity. This is Amino acid--[acyl-carrier-protein] ligase 1 from Bradyrhizobium diazoefficiens (strain JCM 10833 / BCRC 13528 / IAM 13628 / NBRC 14792 / USDA 110).